A 581-amino-acid chain; its full sequence is Sulfate adenylyltransferase (581 aa).

Residues 1–176 (MANAPHGGVL…VQAIQAPTHF (176 aa)) form an N-terminal region. The segment at 177 to 401 (DYVPLRFTPA…LRESYPPRPQ (225 aa)) is catalytic. Residue glutamine 204 coordinates sulfate. Residues 204-207 (QTRN) and 298-301 (GRDH) contribute to the ATP site. Residues threonine 205, arginine 206, and asparagine 207 contribute to the active site. Residue arginine 206 coordinates sulfate. Position 302 (alanine 302) interacts with sulfate. Methionine 340 contacts ATP. Residues 402–581 (QGFTILLTGL…IMILESQNLV (180 aa)) form an allosteric regulation domain; adenylyl-sulfate kinase-like region. Residues 441-444 (EELR), 486-487 (TA), and arginine 526 contribute to the 3'-phosphoadenylyl sulfate site.

The protein in the N-terminal section; belongs to the sulfate adenylyltransferase family. This sequence in the C-terminal section; belongs to the APS kinase family. Homohexamer. Dimer of trimers.

Its subcellular location is the cytoplasm. The catalysed reaction is sulfate + ATP + H(+) = adenosine 5'-phosphosulfate + diphosphate. The protein operates within sulfur metabolism; hydrogen sulfide biosynthesis; sulfite from sulfate: step 1/3. Allosterically inhibited by 3'-phosphoadenosine 5'-phosphosulfate (PAPS). Catalyzes the first intracellular reaction of sulfate assimilation, forming adenosine-5'-phosphosulfate (APS) from inorganic sulfate and ATP. Plays an important role in sulfate activation as a component of the biosynthesis pathway of sulfur-containing amino acids. The polypeptide is Sulfate adenylyltransferase (Cryptococcus neoformans var. neoformans serotype D (strain B-3501A) (Filobasidiella neoformans)).